A 99-amino-acid chain; its full sequence is UPF0235 protein Avin_03050 (99 aa).

The disordered stretch occupies residues 66–99 (VSLESGESNRQKRVRIRRPRQLPALPGLAPRPDA). Basic residues predominate over residues 76 to 85 (QKRVRIRRPR).

This sequence belongs to the UPF0235 family.

The protein is UPF0235 protein Avin_03050 of Azotobacter vinelandii (strain DJ / ATCC BAA-1303).